The sequence spans 419 residues: 2-amino-3-ketobutyrate coenzyme A ligase, mitochondrial (419 aa).

The transit peptide at 1 to 21 directs the protein to the mitochondrion; it reads MWPGNAWRAALFWVPRGRRAQ. K45 carries the post-translational modification N6-acetyllysine; alternate. The residue at position 45 (K45) is an N6-succinyllysine; alternate. 134–135 lines the pyridoxal 5'-phosphate pocket; that stretch reads CY. H159 is a substrate binding site. K187 carries the N6-acetyllysine; alternate modification. K187 carries the N6-succinyllysine; alternate modification. Pyridoxal 5'-phosphate-binding positions include S206, 262-265, and 295-296; these read TLGK and SN. K265 carries the N6-(pyridoxal phosphate)lysine modification. An N6-succinyllysine mark is found at K326 and K368. Residue K383 is modified to N6-acetyllysine; alternate. K383 bears the N6-succinyllysine; alternate mark. R389 is a binding site for substrate.

The protein belongs to the class-II pyridoxal-phosphate-dependent aminotransferase family. Requires pyridoxal 5'-phosphate as cofactor. As to expression, strongly expressed in heart, brain, liver and pancreas. Also found in lung.

It is found in the mitochondrion. It localises to the nucleus. The catalysed reaction is glycine + acetyl-CoA = (2S)-2-amino-3-oxobutanoate + CoA. In terms of biological role, pyridoxal phosphate (PLP) dependent enzyme, which catalyzes the cleavage of 2-amino-3-oxobutanoate to glycine and acetyl-CoA. This Homo sapiens (Human) protein is 2-amino-3-ketobutyrate coenzyme A ligase, mitochondrial.